The following is a 267-amino-acid chain: Phosphate import ATP-binding protein PstB 2 (267 aa).

One can recognise an ABC transporter domain in the interval Leu21–Val262. Gly53–Ser60 contacts ATP.

This sequence belongs to the ABC transporter superfamily. Phosphate importer (TC 3.A.1.7) family. The complex is composed of two ATP-binding proteins (PstB), two transmembrane proteins (PstC and PstA) and a solute-binding protein (PstS).

The protein localises to the cell membrane. It catalyses the reaction phosphate(out) + ATP + H2O = ADP + 2 phosphate(in) + H(+). In terms of biological role, part of the ABC transporter complex PstSACB involved in phosphate import. Responsible for energy coupling to the transport system. This Streptococcus pyogenes serotype M18 (strain MGAS8232) protein is Phosphate import ATP-binding protein PstB 2.